Here is a 312-residue protein sequence, read N- to C-terminus: uncharacterized protein (312 aa).

Transmembrane regions (helical) follow at residues 4 to 24 and 286 to 306; these read AIYL…TYAE and YLLS…AIYL.

The protein localises to the cell membrane. This is an uncharacterized protein from Methanocaldococcus jannaschii (strain ATCC 43067 / DSM 2661 / JAL-1 / JCM 10045 / NBRC 100440) (Methanococcus jannaschii).